Consider the following 400-residue polypeptide: 11-beta-hydroxysteroid dehydrogenase type 2 (400 aa).

Residue T82–A111 participates in NAD(+) binding. Substrate is bound at residue S219. The active-site Proton acceptor is the Y232. The segment at P378–L400 is disordered. The span at Q389–L400 shows a compositional bias: polar residues.

It belongs to the short-chain dehydrogenases/reductases (SDR) family. As to quaternary structure, interacts with ligand-free cytoplasmic NR3C2. Highly expressed in kidney, adrenal gland and distal colon, and at much lower levels in lung, hypothalamus, hippocampus, and midbrain.

It is found in the microsome. The protein localises to the endoplasmic reticulum. It catalyses the reaction an 11beta-hydroxysteroid + NAD(+) = an 11-oxosteroid + NADH + H(+). It carries out the reaction corticosterone + NAD(+) = 11-dehydrocorticosterone + NADH + H(+). The enzyme catalyses 11beta,17beta-dihydroxyandrost-4-ene-3-one + NAD(+) = 17beta-hydroxyandrost-4-ene-3,11-dione + NADH + H(+). The catalysed reaction is 11beta-hydroxyandrost-4-ene-3,17-dione + NAD(+) = androst-4-ene-3,11,17-trione + NADH + H(+). The protein operates within steroid metabolism. Its activity is regulated as follows. Inhibited by glycyrrhetinic acid. Induced by progesterone, through the Ihh signaling pathway. In terms of biological role, catalyzes the conversion of biologically active 11beta-hydroxyglucocorticoids (11beta-hydroxysteroid) such as corticosterone, to inactive 11-ketoglucocorticoids (11-oxosteroid) such as 11-dehydrocorticosterone, in the presence of NAD(+). Functions as a dehydrogenase (oxidase), thereby decreasing the concentration of active glucocorticoids, thus protecting the nonselective mineralocorticoid receptor from occupation by glucocorticoids. Plays an important role in maintaining glucocorticoids balance during preimplantation and protects the fetus from excessive maternal corticosterone exposure. Catalyzes the oxidation of 11beta-hydroxytestosterone (11beta,17beta-dihydroxyandrost-4-ene-3-one) to 11-ketotestosterone (17beta-hydroxyandrost-4-ene-3,11-dione), a major bioactive androgen. Catalyzes the conversion of 11beta-hydroxyandrostenedione (11beta-hydroxyandrost-4-ene-3,17-dione) to 11-ketoandrostenedione (androst-4-ene-3,11,17-trione), which can be further metabolized to 11-ketotestosterone. Converts 7-beta-25-dihydroxycholesterol to 7-oxo-25-hydroxycholesterol in vitro. 7-beta-25-dihydroxycholesterol (not 7-oxo-25-hydroxycholesterol) acts as a ligand for the G-protein-coupled receptor (GPCR) Epstein-Barr virus-induced gene 2 (EBI2) and may thereby regulate immune cell migration. The protein is 11-beta-hydroxysteroid dehydrogenase type 2 (Hsd11b2) of Rattus norvegicus (Rat).